A 299-amino-acid chain; its full sequence is Regucalcin (299 aa).

Residue glutamate 18 coordinates a divalent metal cation. Substrate-binding residues include arginine 101, asparagine 103, and glutamate 121. Lysine 144 is subject to N6-succinyllysine. Asparagine 154 and aspartate 204 together coordinate a divalent metal cation. Aspartate 204 (proton donor/acceptor) is an active-site residue. An N6-succinyllysine mark is found at lysine 244 and lysine 253.

The protein belongs to the SMP-30/CGR1 family. As to quaternary structure, monomer. Requires Zn(2+) as cofactor. It depends on Mn(2+) as a cofactor. Ca(2+) serves as cofactor. Mg(2+) is required as a cofactor. In terms of tissue distribution, mainly present in the liver. Weak expression was found in the brain, lung and kidney.

Its subcellular location is the cytoplasm. The catalysed reaction is D-glucono-1,5-lactone + H2O = D-gluconate + H(+). It participates in cofactor biosynthesis; L-ascorbate biosynthesis via UDP-alpha-D-glucuronate pathway; L-ascorbate from UDP-alpha-D-glucuronate: step 3/4. Its function is as follows. Gluconolactonase with low activity towards other sugar lactones, including gulonolactone and galactonolactone. Catalyzes a key step in ascorbic acid (vitamin C) biosynthesis. Can also hydrolyze diisopropyl phosphorofluoridate and phenylacetate (in vitro). Calcium-binding protein. Modulates Ca(2+) signaling, and Ca(2+)-dependent cellular processes and enzyme activities. The sequence is that of Regucalcin (Rgn) from Mus musculus (Mouse).